The primary structure comprises 1028 residues: Pro-apoptotic serine protease nma111 (1028 aa).

Residues 1-49 (MDLNGDAGAKRKRSSITTPAERPVKHLRPESSALTPGDSTPANGTVYDV) are disordered. Residues 32–43 (SALTPGDSTPAN) are compositionally biased toward polar residues. Residues 82–266 (VVSIHFCQTC…AATDYFLPLD (185 aa)) are serine protease. Catalysis depends on charge relay system residues histidine 120, aspartate 151, and serine 233. PDZ domains follow at residues 289-374 (QWIL…LLVQ) and 876-957 (VFCG…VTFD). The tract at residues 983-1028 (QPSGWRTVSHDKDKYKDGIAPDAANLNPDAMDEGFDGVSDIEPDLE) is disordered. Residues 990–1001 (VSHDKDKYKDGI) are compositionally biased toward basic and acidic residues. Residues 1012–1028 (AMDEGFDGVSDIEPDLE) show a composition bias toward acidic residues.

The protein belongs to the peptidase S1C family.

The protein localises to the nucleus. Its function is as follows. Nuclear serine protease which mediates apoptosis. In Aspergillus niger (strain ATCC MYA-4892 / CBS 513.88 / FGSC A1513), this protein is Pro-apoptotic serine protease nma111 (nma111).